The sequence spans 289 residues: tRNA pseudouridine synthase B (289 aa).

D38 serves as the catalytic Nucleophile.

This sequence belongs to the pseudouridine synthase TruB family. Type 1 subfamily.

The enzyme catalyses uridine(55) in tRNA = pseudouridine(55) in tRNA. Responsible for synthesis of pseudouridine from uracil-55 in the psi GC loop of transfer RNAs. This is tRNA pseudouridine synthase B from Clostridium acetobutylicum (strain ATCC 824 / DSM 792 / JCM 1419 / IAM 19013 / LMG 5710 / NBRC 13948 / NRRL B-527 / VKM B-1787 / 2291 / W).